Consider the following 444-residue polypeptide: Phosphoglucosamine mutase (444 aa).

S104 serves as the catalytic Phosphoserine intermediate. Positions 104, 243, 245, and 247 each coordinate Mg(2+). S104 bears the Phosphoserine mark.

Belongs to the phosphohexose mutase family. The cofactor is Mg(2+). In terms of processing, activated by phosphorylation.

The enzyme catalyses alpha-D-glucosamine 1-phosphate = D-glucosamine 6-phosphate. In terms of biological role, catalyzes the conversion of glucosamine-6-phosphate to glucosamine-1-phosphate. This chain is Phosphoglucosamine mutase, found in Neisseria meningitidis serogroup A / serotype 4A (strain DSM 15465 / Z2491).